A 398-amino-acid polypeptide reads, in one-letter code: Isochorismate synthase DhbC (398 aa).

Serine 271 carries the post-translational modification Phosphoserine.

It belongs to the isochorismate synthase family.

It catalyses the reaction chorismate = isochorismate. The protein operates within siderophore biosynthesis; bacillibactin biosynthesis. This Bacillus subtilis (strain 168) protein is Isochorismate synthase DhbC (dhbC).